A 196-amino-acid polypeptide reads, in one-letter code: Small ribosomal subunit protein uS5 (196 aa).

The S5 DRBM domain maps to F17–V80. Residues G164–Q196 form a disordered region. Polar residues predominate over residues S170–T183.

Belongs to the universal ribosomal protein uS5 family. Part of the 30S ribosomal subunit. Contacts proteins S4 and S8.

With S4 and S12 plays an important role in translational accuracy. Its function is as follows. Located at the back of the 30S subunit body where it stabilizes the conformation of the head with respect to the body. The polypeptide is Small ribosomal subunit protein uS5 (Deinococcus radiodurans (strain ATCC 13939 / DSM 20539 / JCM 16871 / CCUG 27074 / LMG 4051 / NBRC 15346 / NCIMB 9279 / VKM B-1422 / R1)).